Reading from the N-terminus, the 436-residue chain is GTPase Der (436 aa).

EngA-type G domains follow at residues 3-167 (NIVA…PIKP) and 177-352 (PRFA…ENRQ). GTP contacts are provided by residues 9-16 (GRPNVGKS), 56-60 (DTGGY), 119-122 (NKVD), 183-190 (GRPNAGKS), 230-234 (DTAGI), and 295-298 (NKWD). A KH-like domain is found at 353–436 (QRISTSKFNE…VPIDIYIREK (84 aa)).

It belongs to the TRAFAC class TrmE-Era-EngA-EngB-Septin-like GTPase superfamily. EngA (Der) GTPase family. As to quaternary structure, associates with the 50S ribosomal subunit.

GTPase that plays an essential role in the late steps of ribosome biogenesis. In Flavobacterium psychrophilum (strain ATCC 49511 / DSM 21280 / CIP 103535 / JIP02/86), this protein is GTPase Der.